Here is a 137-residue protein sequence, read N- to C-terminus: Insulin-like peptide 2 (137 aa).

The signal sequence occupies residues 1-26 (MSKPLSFISMVAVILLASSTVKLAQG). Intrachain disulfides connect cysteine 29–cysteine 119, cysteine 41–cysteine 132, and cysteine 118–cysteine 123. Residues 53–104 (AMPGADSDLDALNPLQFVQEFEEEDNSISEPLRSALFPGSYLGGVLNSLAEV) constitute a propeptide, connecting peptide.

It belongs to the insulin family. As to quaternary structure, heterodimer of a B chain and an A chain linked by two disulfide bonds. Broadly expressed at a low level in the embryonic mesoderm, beginning at stage 12. Expressed at a high level in the embryonic anterior midgut, with expression diminishing at late stage 16. Expressed at a low level in larval imaginal disks. Expressed at a high level in larval salivary glands and in seven cells of each larval brain hemisphere that may correspond to neurosecretory cells.

The protein localises to the secreted. Functionally, possible ligand of InR/insulin-like receptor. Its function is as follows. Plays a role in regulating body size by increasing cell size and cell number of individual organs. Probably mediates its growth effects by acting as a ligand for the insulin receptor and transducing a signal via the Chico/PI3K/Akt(PKB) pathway. The protein is Insulin-like peptide 2 of Drosophila melanogaster (Fruit fly).